The sequence spans 642 residues: Kelch-like protein 17 (642 aa).

The segment at 1-53 is disordered; the sequence is MQPRSERPAGRTQSPEHGSPGPGPEAPPPPPPQPPAPEAERTRPRQARPAAPM. Pro residues predominate over residues 21 to 37; sequence GPGPEAPPPPPPQPPAP. The region spanning 92 to 159 is the BTB domain; it reads CDIVLHVAAK…AYTAEIVVGE (68 aa). The BACK domain maps to 194–296; the sequence is CLGIRGFADA…SRDFLLGHVD (103 aa). Residues 289–641 are interaction with F-actin; sequence DFLLGHVDAE…SPTLSVSSTS (353 aa). Kelch repeat units follow at residues 343-389, 390-436, 438-483, 484-530, 532-577, and 578-624; these read VLFA…AVGN, RLYA…ALHG, LYSA…TLDG, NLYA…VLEG, LYVA…AMDG, and WLYA…VLEL. Residues 640–642 are interaction with PDZK1; that stretch reads TSL.

Interacts with F-actin; the interaction disrupts the F-actin structures and leads to marked changes of neuronal morphology. Component of a complex, composed of PDZK1, SYNGAP1, KLHL17 and NMDA receptors. Interacts directly with PDZK1 (via PDZ1 domain); the interaction is important for integrity of actin cytoskeleton structures in neurons. Interacts with DLG4 and SYNGAP1. Interacts (via kelch repeats) with GRIK2 (via C-terminus); the interaction targets GRIK2 for degradation via ubiquitin-proteasome pathway. Interacts with GRIK1. Interacts with (via BTB domain) CUL3; the interaction regulates surface GRIK2 expression.

It localises to the postsynaptic density. The protein localises to the synapse. It participates in protein modification; protein ubiquitination. Its function is as follows. Substrate-recognition component of some cullin-RING-based BCR (BTB-CUL3-RBX1) E3 ubiquitin-protein ligase complexes. The BCR(KLHL17) complex mediates the ubiquitination and subsequent degradation of GLUR6. May play a role in the actin-based neuronal function. In Homo sapiens (Human), this protein is Kelch-like protein 17 (KLHL17).